Here is a 307-residue protein sequence, read N- to C-terminus: Methionyl-tRNA formyltransferase (307 aa).

110–113 (SLLP) lines the (6S)-5,6,7,8-tetrahydrofolate pocket.

The protein belongs to the Fmt family.

The enzyme catalyses L-methionyl-tRNA(fMet) + (6R)-10-formyltetrahydrofolate = N-formyl-L-methionyl-tRNA(fMet) + (6S)-5,6,7,8-tetrahydrofolate + H(+). Attaches a formyl group to the free amino group of methionyl-tRNA(fMet). The formyl group appears to play a dual role in the initiator identity of N-formylmethionyl-tRNA by promoting its recognition by IF2 and preventing the misappropriation of this tRNA by the elongation apparatus. The chain is Methionyl-tRNA formyltransferase from Rhodococcus erythropolis (strain PR4 / NBRC 100887).